Consider the following 132-residue polypeptide: T-cell receptor alpha chain V region CTL-F3 (132 aa).

The N-terminal stretch at 1–22 (MNMRPDTCSVLVLLLMLRRNNG) is a signal peptide. Residues 23-114 (DSVTQTEGLV…DSALYYCALS (92 aa)) form a v segment region. The N-linked (GlcNAc...) asparagine glycan is linked to N43. An intrachain disulfide couples C44 to C111. Residues 115 to 132 (NAGAKLTFGGGTRLTVRP) form a j segment region.

The protein is T-cell receptor alpha chain V region CTL-F3 of Mus musculus (Mouse).